The chain runs to 211 residues: Recombination protein RecR (211 aa).

Residues cysteine 70 to cysteine 85 form a C4-type zinc finger. A Toprim domain is found at lysine 93–glutamine 190.

It belongs to the RecR family.

Functionally, may play a role in DNA repair. It seems to be involved in an RecBC-independent recombinational process of DNA repair. It may act with RecF and RecO. This chain is Recombination protein RecR, found in Aquifex aeolicus (strain VF5).